Here is a 323-residue protein sequence, read N- to C-terminus: Putative CRISPR-associated protein SSO1401 (323 aa).

In terms of assembly, sometimes seen associated with the aCascade ribonucleoprotein complex, minimally composed of Csa2 and Cas5a, which binds crRNA. Other probable components of aCascade in strain P1 are Cas6 and Csa5, while SSO1399, Cas5b (SSO1400) and SSO1401 have sometimes been seen weakly associated. The Csa2-Cas5a-crRNA complex also binds target DNA homologous to crRNA, probably forming an R-loop. Purified aCascade forms a filament about 6 nm in width.

CRISPR (clustered regularly interspaced short palindromic repeat) is an adaptive immune system that provides protection against mobile genetic elements (viruses, transposable elements and conjugative plasmids). CRISPR clusters contain spacers, sequences complementary to antecedent mobile elements, and target invading nucleic acids. CRISPR clusters are transcribed and processed into CRISPR RNA (crRNA). This is Putative CRISPR-associated protein SSO1401 from Saccharolobus solfataricus (strain ATCC 35092 / DSM 1617 / JCM 11322 / P2) (Sulfolobus solfataricus).